A 165-amino-acid polypeptide reads, in one-letter code: Small ribosomal subunit protein uS5 (165 aa).

One can recognise an S5 DRBM domain in the interval 13–76; that stretch reads LEEKVLVVNR…DAARKNLVSI (64 aa).

Belongs to the universal ribosomal protein uS5 family. Part of the 30S ribosomal subunit. Contacts proteins S4 and S8.

Functionally, with S4 and S12 plays an important role in translational accuracy. Located at the back of the 30S subunit body where it stabilizes the conformation of the head with respect to the body. The sequence is that of Small ribosomal subunit protein uS5 from Chlamydia muridarum (strain MoPn / Nigg).